Here is a 446-residue protein sequence, read N- to C-terminus: tRNA-2-methylthio-N(6)-dimethylallyladenosine synthase (446 aa).

An MTTase N-terminal domain is found at 3-120 (KKIYIKTFGC…LPEMLKQRRS (118 aa)). 6 residues coordinate [4Fe-4S] cluster: cysteine 12, cysteine 49, cysteine 83, cysteine 157, cysteine 161, and cysteine 164. Positions 143 to 375 (KVEGATAFVS…QAVIDQNTRR (233 aa)) constitute a Radical SAM core domain. Positions 378–444 (DEMVGSVQRI…AYTLRGEIVV (67 aa)) constitute a TRAM domain.

Belongs to the methylthiotransferase family. MiaB subfamily. As to quaternary structure, monomer. It depends on [4Fe-4S] cluster as a cofactor.

It localises to the cytoplasm. It carries out the reaction N(6)-dimethylallyladenosine(37) in tRNA + (sulfur carrier)-SH + AH2 + 2 S-adenosyl-L-methionine = 2-methylsulfanyl-N(6)-dimethylallyladenosine(37) in tRNA + (sulfur carrier)-H + 5'-deoxyadenosine + L-methionine + A + S-adenosyl-L-homocysteine + 2 H(+). Catalyzes the methylthiolation of N6-(dimethylallyl)adenosine (i(6)A), leading to the formation of 2-methylthio-N6-(dimethylallyl)adenosine (ms(2)i(6)A) at position 37 in tRNAs that read codons beginning with uridine. The chain is tRNA-2-methylthio-N(6)-dimethylallyladenosine synthase from Herminiimonas arsenicoxydans.